Consider the following 865-residue polypeptide: Ribosome biogenesis protein BOP1 homolog (865 aa).

Disordered stretches follow at residues 1-195 (MVAN…LKLG) and 207-240 (KTRG…EEDI). Composition is skewed to acidic residues over residues 30–44 (LDES…ESDY), 57–79 (NEGE…DDVL), and 87–159 (DGEE…EEEA). Positions 160–180 (KENGKEKPAKAKAERKQREEQ) are enriched in basic and acidic residues. WD repeat units lie at residues 526 to 565 (GHTS…CIRT), 567 to 607 (PTGD…YMLV), 651 to 693 (THFR…SQVP), 696 to 734 (KSKG…MMKK), 737 to 776 (PGCK…KPYQ), 780 to 819 (IHNA…DLLQ), and 835 to 865 (VNDF…RLYT).

This sequence belongs to the WD repeat BOP1/ERB1 family.

The protein localises to the nucleus. The protein resides in the nucleolus. It is found in the nucleoplasm. Functionally, required for maturation of ribosomal RNAs and formation of the large ribosomal subunit. This is Ribosome biogenesis protein BOP1 homolog from Anopheles gambiae (African malaria mosquito).